The primary structure comprises 213 residues: Superoxide dismutase [Fe] (213 aa).

Fe cation is bound by residues His26, His73, Asp156, and His160.

The protein belongs to the iron/manganese superoxide dismutase family. As to quaternary structure, homodimer. Fe cation serves as cofactor.

It catalyses the reaction 2 superoxide + 2 H(+) = H2O2 + O2. Functionally, destroys superoxide anion radicals which are normally produced within the cells and which are toxic to biological systems. The protein is Superoxide dismutase [Fe] (sodB) of Helicobacter pylori (strain ATCC 700392 / 26695) (Campylobacter pylori).